Here is a 162-residue protein sequence, read N- to C-terminus: MKKQLQRKVDQVATLTDKFKMAKTIVMFEYKGLSVANLTSLRSELHKENIDLKVYKNNITRRAAINAGFDALEPSLTGPLAVAISYDDVVAPAKIINEFAKKNKTVVITSGVIEAKVADQVAIMALANLPSRETLLTQLAAGLLMPVKEIAIGLNMLLETKE.

Belongs to the universal ribosomal protein uL10 family. Part of the ribosomal stalk of the 50S ribosomal subunit. The N-terminus interacts with L11 and the large rRNA to form the base of the stalk. The C-terminus forms an elongated spine to which L12 dimers bind in a sequential fashion forming a multimeric L10(L12)X complex.

Forms part of the ribosomal stalk, playing a central role in the interaction of the ribosome with GTP-bound translation factors. The chain is Large ribosomal subunit protein uL10 from Acholeplasma laidlawii (strain PG-8A).